The following is a 138-amino-acid chain: Ribosome maturation factor RimP (138 aa).

Belongs to the RimP family.

It localises to the cytoplasm. Required for maturation of 30S ribosomal subunits. The polypeptide is Ribosome maturation factor RimP (Campylobacter concisus (strain 13826)).